Reading from the N-terminus, the 262-residue chain is Indole-3-glycerol phosphate synthase (262 aa).

It belongs to the TrpC family.

It catalyses the reaction 1-(2-carboxyphenylamino)-1-deoxy-D-ribulose 5-phosphate + H(+) = (1S,2R)-1-C-(indol-3-yl)glycerol 3-phosphate + CO2 + H2O. It participates in amino-acid biosynthesis; L-tryptophan biosynthesis; L-tryptophan from chorismate: step 4/5. The sequence is that of Indole-3-glycerol phosphate synthase from Staphylococcus epidermidis (strain ATCC 12228 / FDA PCI 1200).